The following is a 353-amino-acid chain: MTIALGKFTKDEKDLFDIMDDWLRRDRFVFVGWSGLLLFPCAYFALGGWFTGTTFVTSWYTHGLASSYLEGCNFLTAAVSTPANSLAHSLLLLWGPEAQGDFTRWCQLGGLWAFVALHGAFALIGFMLRQFELARSVQLRPYNAIAFSGPIAVFVSVFLIYPLGQSGWFFAPSFGVAAIFRFILFFQGFHNWTLNPFHMMGVAGVLGAALLCAIHGATVENTLFEDGDGANTFRAFNPTQAEETYSMVTANRFWSQIFGVAFSNKRWLHFFMLFVPVTGLWMSALGVVGLALNLRAYDFVSQEIRAAEDPEFETFYTKNILLNEGIRAWMAAQDQPHENLIFPEEVLPRGNAL.

T2 is subject to N-acetylthreonine. Position 2 is a phosphothreonine (T2). Residues 41-61 (CAYFALGGWFTGTTFVTSWYT) traverse the membrane as a helical segment. H118 serves as a coordination point for chlorophyll a. A helical transmembrane segment spans residues 125–141 (GFMLRQFELARSVQLRP). The pheophytin a site is built by Q130 and N143. A helical transmembrane segment spans residues 153-166 (VFVSVFLIYPLGQS). A chlorophyll a-binding site is contributed by H198. Residues 208 to 228 (AALLCAIHGATVENTLFEDGD) form a helical membrane-spanning segment. A plastoquinone is bound by residues H215 and F262. H215 is a Fe cation binding site. H269 serves as a coordination point for Fe cation. Residues 279-295 (GLWMSALGVVGLALNLR) traverse the membrane as a helical segment.

The protein belongs to the reaction center PufL/M/PsbA/D family. As to quaternary structure, PSII is composed of 1 copy each of membrane proteins PsbA, PsbB, PsbC, PsbD, PsbE, PsbF, PsbH, PsbI, PsbJ, PsbK, PsbL, PsbM, PsbT, PsbX, PsbY, PsbZ, Psb30/Ycf12, at least 3 peripheral proteins of the oxygen-evolving complex and a large number of cofactors. It forms dimeric complexes. Interacts with PAM68. It depends on The D1/D2 heterodimer binds P680, chlorophylls that are the primary electron donor of PSII, and subsequent electron acceptors. It shares a non-heme iron and each subunit binds pheophytin, quinone, additional chlorophylls, carotenoids and lipids. There is also a Cl(-1) ion associated with D1 and D2, which is required for oxygen evolution. The PSII complex binds additional chlorophylls, carotenoids and specific lipids. as a cofactor. Post-translationally, phosphorylation occurs in normal plant growth light conditions. Rapid dephosphorylation occurs during heat shock.

The protein localises to the plastid. It is found in the chloroplast thylakoid membrane. It carries out the reaction 2 a plastoquinone + 4 hnu + 2 H2O = 2 a plastoquinol + O2. Its function is as follows. Photosystem II (PSII) is a light-driven water:plastoquinone oxidoreductase that uses light energy to abstract electrons from H(2)O, generating O(2) and a proton gradient subsequently used for ATP formation. It consists of a core antenna complex that captures photons, and an electron transfer chain that converts photonic excitation into a charge separation. The D1/D2 (PsbA/PsbD) reaction center heterodimer binds P680, the primary electron donor of PSII as well as several subsequent electron acceptors. D2 is needed for assembly of a stable PSII complex. This chain is Photosystem II D2 protein, found in Arabidopsis thaliana (Mouse-ear cress).